Reading from the N-terminus, the 306-residue chain is Acetyl-coenzyme A carboxylase carboxyl transferase subunit beta (306 aa).

A CoA carboxyltransferase N-terminal domain is found at 25–294 (VWTKCDSCGQ…PQDPLPHEPR (270 aa)). 4 residues coordinate Zn(2+): C29, C32, C48, and C51. A C4-type zinc finger spans residues 29-51 (CDSCGQVLYRAELERNLEVCPKC). Positions 281–306 (NRPQPQDPLPHEPRPDAVPEDHQDEV) are disordered. Residues 289-306 (LPHEPRPDAVPEDHQDEV) show a composition bias toward basic and acidic residues.

Belongs to the AccD/PCCB family. In terms of assembly, acetyl-CoA carboxylase is a heterohexamer composed of biotin carboxyl carrier protein (AccB), biotin carboxylase (AccC) and two subunits each of ACCase subunit alpha (AccA) and ACCase subunit beta (AccD). Requires Zn(2+) as cofactor.

It is found in the cytoplasm. The catalysed reaction is N(6)-carboxybiotinyl-L-lysyl-[protein] + acetyl-CoA = N(6)-biotinyl-L-lysyl-[protein] + malonyl-CoA. Its pathway is lipid metabolism; malonyl-CoA biosynthesis; malonyl-CoA from acetyl-CoA: step 1/1. Component of the acetyl coenzyme A carboxylase (ACC) complex. Biotin carboxylase (BC) catalyzes the carboxylation of biotin on its carrier protein (BCCP) and then the CO(2) group is transferred by the transcarboxylase to acetyl-CoA to form malonyl-CoA. This Sodalis glossinidius (strain morsitans) protein is Acetyl-coenzyme A carboxylase carboxyl transferase subunit beta.